A 48-amino-acid chain; its full sequence is uncharacterized protein (48 aa).

The chain crosses the membrane as a helical span at residues 6–26; the sequence is IILLMIVCLVVSVLVVVWIIL.

The protein localises to the host membrane. This is an uncharacterized protein from Spiroplasma melliferum (SpV4).